The sequence spans 1226 residues: Integrin alpha pat-2 (1226 aa).

The N-terminal stretch at methionine 1 to threonine 25 is a signal peptide. At phenylalanine 26–proline 1154 the chain is on the extracellular side. FG-GAP repeat units lie at residues asparagine 27 to glutamate 94, asparagine 108 to glutamate 171, glutamate 178 to proline 233, asparagine 234 to asparagine 290, leucine 291 to tyrosine 345, glycine 362 to glutamate 421, and glutamine 425 to alanine 488. N-linked (GlcNAc...) asparagine glycans are attached at residues asparagine 108, asparagine 228, and asparagine 290. Asparagine 608 carries N-linked (GlcNAc...) asparagine glycosylation. Residues arginine 620–aspartate 622 carry the Cell attachment site motif. Residue asparagine 679 is glycosylated (N-linked (GlcNAc...) asparagine). The tract at residues serine 709–lysine 733 is disordered. N-linked (GlcNAc...) asparagine glycosylation is found at asparagine 775 and asparagine 819. Disordered stretches follow at residues leucine 898–glutamate 958 and aspartate 982–serine 1040. The span at arginine 920–threonine 931 shows a compositional bias: acidic residues. The span at threonine 932–serine 951 shows a compositional bias: low complexity. Positions tyrosine 985–phenylalanine 1005 are enriched in acidic residues. Basic residues predominate over residues serine 1010–glycine 1026. Positions glutamate 1027–serine 1040 are enriched in basic and acidic residues. Residues tryptophan 1155–tryptophan 1177 traverse the membrane as a helical segment. Topologically, residues arginine 1178–leucine 1226 are cytoplasmic. The segment at histidine 1191–leucine 1226 is disordered. A compositionally biased stretch (polar residues) spans proline 1200 to leucine 1226.

Belongs to the integrin alpha chain family. Heterodimer of an alpha and a beta subunit. Interacts with beta subunit pat-3. Interacts with dep-1. Component of an integrin containing attachment complex, composed of at least pat-2, pat-3, pat-4, pat-6, unc-52, unc-97 and unc-112. Expressed in body-wall muscle cells, distal tip cells, and vulval tissue.

The protein resides in the membrane. Its function is as follows. Required for muscle development probably through the regulation of the actin-myosin cytoskeleton. Component of an integrin containing attachment complex, which is required for muscle maintenance. During the formation of neuromuscular junctions at the larval stage, negatively regulates membrane protrusion from body wall muscles, probably through lamins such as epi-1, lam-2 and unc-52. Required for distal tip cell migration and dorsal pathfinding. Required for egg-laying. May play a role in cell motility and cell-cell interactions. Plays a role in vulval development. Probably within the alpha pat-2/beta pat-3 integrin receptor complex, plays a role in the negative regulation of let-23 signaling and vulval induction. This is probably partly by restricting the mobility of the let-23 receptor on the plasma membrane of vulval cells which thereby attenuates let-23 signaling. In Caenorhabditis elegans, this protein is Integrin alpha pat-2.